Reading from the N-terminus, the 350-residue chain is Probable arabinogalactan endo-beta-1,4-galactanase A (350 aa).

The first 16 residues, 1-16 (MIYSLLLSALPLLSSA), serve as a signal peptide directing secretion. The N-linked (GlcNAc...) asparagine glycan is linked to asparagine 128. Glutamate 152 functions as the Proton donor in the catalytic mechanism. The active-site Nucleophile is glutamate 262.

This sequence belongs to the glycosyl hydrolase 53 family.

It localises to the secreted. It catalyses the reaction The enzyme specifically hydrolyzes (1-&gt;4)-beta-D-galactosidic linkages in type I arabinogalactans.. Functionally, endogalactanase involved in the degradation of plant cell wall polysaccharides, and more particularly of hairy regions of pectin. This Aspergillus niger (strain ATCC MYA-4892 / CBS 513.88 / FGSC A1513) protein is Probable arabinogalactan endo-beta-1,4-galactanase A (galA).